Here is a 188-residue protein sequence, read N- to C-terminus: Elongation factor P (188 aa).

The protein belongs to the elongation factor P family.

It is found in the cytoplasm. It functions in the pathway protein biosynthesis; polypeptide chain elongation. Involved in peptide bond synthesis. Stimulates efficient translation and peptide-bond synthesis on native or reconstituted 70S ribosomes in vitro. Probably functions indirectly by altering the affinity of the ribosome for aminoacyl-tRNA, thus increasing their reactivity as acceptors for peptidyl transferase. This is Elongation factor P from Malacoplasma penetrans (strain HF-2) (Mycoplasma penetrans).